The primary structure comprises 227 residues: Agamous-like MADS-box protein AGL8 homolog (227 aa).

Residues 3 to 57 form the MADS-box domain; it reads RGRVQLKRIENKINRQVTFSKRRSGLLKKAHEISVLCDAEVGLIVFSTKGKLFEY. In terms of domain architecture, K-box spans 88 to 178; it reads PVSWTLEHRK…SKKVKEREKS (91 aa).

Flower specific.

It is found in the nucleus. Its function is as follows. Probable transcription factor. The chain is Agamous-like MADS-box protein AGL8 homolog (TDR4) from Solanum lycopersicum (Tomato).